The primary structure comprises 457 residues: Multidrug resistance protein MdtK (457 aa).

The next 12 helical transmembrane spans lie at 11–31, 53–73, 93–113, 127–147, 160–180, 188–208, 243–263, 276–296, 314–334, 350–370, 387–407, and 418–438; these read LLAL…MGFV, IWLP…PVIA, WLAG…GYII, AVGY…FQVA, GMVM…IFIY, LGGI…FIAM, LPIA…ALLV, IALN…AAVT, AART…IFTV, VVAL…SDSI, IFFI…YILA, and PAGF…LMML.

It belongs to the multi antimicrobial extrusion (MATE) (TC 2.A.66.1) family. MdtK subfamily.

Its subcellular location is the cell inner membrane. Functionally, multidrug efflux pump that functions probably as a Na(+)/drug antiporter. The sequence is that of Multidrug resistance protein MdtK from Salmonella newport (strain SL254).